The sequence spans 129 residues: Small ribosomal subunit protein uS11 (129 aa).

Belongs to the universal ribosomal protein uS11 family. As to quaternary structure, part of the 30S ribosomal subunit.

Functionally, located on the platform of the 30S subunit. In Haloarcula marismortui (strain ATCC 43049 / DSM 3752 / JCM 8966 / VKM B-1809) (Halobacterium marismortui), this protein is Small ribosomal subunit protein uS11.